Here is a 788-residue protein sequence, read N- to C-terminus: Cadherin-10 (788 aa).

A signal peptide spans 1–22; the sequence is MTIHQFLLLFLFWVCLPHFCSP. The propeptide occupies 23 to 54; the sequence is EIMFRRTPVPQQRILSSRVPRSDGKILHRQKR. 5 consecutive Cadherin domains span residues 55-160, 161-269, 270-384, 385-487, and 488-606; these read GWMW…EPTF, PEEI…PPRF, PQNT…PPVF, SRSS…DNAP, and QFAV…LLLP. Over 55-613 the chain is Extracellular; it reads GWMWNQFFLL…LLPAGLSTGA (559 aa). N-linked (GlcNAc...) asparagine glycosylation occurs at asparagine 256. Residues asparagine 438, asparagine 456, and asparagine 534 are each glycosylated (N-linked (GlcNAc...) asparagine). The chain crosses the membrane as a helical span at residues 614–634; that stretch reads LIAILLCIIILLVIVVLFAAL. At 635-788 the chain is on the cytoplasmic side; it reads KRQRKKEPLI…YGGGESDKDS (154 aa). 2 positions are modified to phosphoserine: serine 784 and serine 788.

In terms of tissue distribution, predominantly expressed in brain. Also found in adult and fetal kidney. Very low levels detected in prostate and fetal lung.

The protein resides in the cell membrane. Functionally, cadherins are calcium-dependent cell adhesion proteins. They preferentially interact with themselves in a homophilic manner in connecting cells; cadherins may thus contribute to the sorting of heterogeneous cell types. This is Cadherin-10 (CDH10) from Homo sapiens (Human).